Consider the following 156-residue polypeptide: Large ribosomal subunit protein uL15 (156 aa).

The disordered stretch occupies residues 25-48; sequence RGIGCGKGKTSGRGHKGQKARSGV. Residues 34 to 43 show a composition bias toward basic residues; it reads TSGRGHKGQK.

It belongs to the universal ribosomal protein uL15 family. As to quaternary structure, part of the 50S ribosomal subunit.

Binds to the 23S rRNA. This Wolbachia pipientis wMel protein is Large ribosomal subunit protein uL15.